The chain runs to 258 residues: Small ribosomal subunit protein uS3 (258 aa).

One can recognise a KH type-2 domain in the interval 16–85; that stretch reads IDEYLEKELE…NPQVEVKEVD (70 aa). The tract at residues 198–258 is disordered; sequence RVTETPAEEA…KDADGEESEK (61 aa). Residues 203-245 show a composition bias toward acidic residues; that stretch reads PAEEASEASEVVEDLEEVEDLEEIEDLEEVEDLEEVEDLEDTE.

This sequence belongs to the universal ribosomal protein uS3 family. In terms of assembly, part of the 30S ribosomal subunit.

Functionally, binds the lower part of the 30S subunit head. The polypeptide is Small ribosomal subunit protein uS3 (Methanothermobacter thermautotrophicus (strain ATCC 29096 / DSM 1053 / JCM 10044 / NBRC 100330 / Delta H) (Methanobacterium thermoautotrophicum)).